A 109-amino-acid polypeptide reads, in one-letter code: Hainantoxin-XVIII-2 (109 aa).

Residues 1–18 form the signal peptide; that stretch reads MKLSIIIIATSLVIAVVA. Residues 19 to 46 constitute a propeptide that is removed on maturation; the sequence is FPSKDSKAIENDKTEQRMEIVVQETARA. Disulfide bonds link Cys-47-Cys-62, Cys-59-Cys-108, and Cys-61-Cys-81.

Belongs to the neurotoxin 25 family. F7 subfamily. Expressed by the venom gland.

It is found in the secreted. In terms of biological role, putative ion channel inhibitor. This Cyriopagopus hainanus (Chinese bird spider) protein is Hainantoxin-XVIII-2.